We begin with the raw amino-acid sequence, 1353 residues long: Xanthine dehydrogenase (1353 aa).

Positions 17–104 (STLIFFVNGK…GSAVTTVEGI (88 aa)) constitute a 2Fe-2S ferredoxin-type domain. Positions 56, 61, 64, 86, 126, 129, 161, and 163 each coordinate [2Fe-2S] cluster. Residues 245–434 (YKGERATWYR…VGLYFPKTLE (190 aa)) enclose the FAD-binding PCMH-type domain. Residues 273–280 (LVVGNTEI), Phe-353, 363–367 (SLGGN), Asp-376, Leu-424, and Lys-442 each bind FAD. 2 residues coordinate Mo-molybdopterin: Gln-790 and Phe-821. Glu-825 and Arg-903 together coordinate substrate. Residue Arg-935 participates in Mo-molybdopterin binding. Position 937 (Phe-937) interacts with substrate. Residue Ala-1102 participates in Mo-molybdopterin binding. Catalysis depends on Glu-1285, which acts as the Proton acceptor.

This sequence belongs to the xanthine dehydrogenase family. As to quaternary structure, homodimer. FAD serves as cofactor. Requires Mo-molybdopterin as cofactor. The cofactor is [2Fe-2S] cluster.

The protein localises to the peroxisome. The enzyme catalyses xanthine + NAD(+) + H2O = urate + NADH + H(+). It carries out the reaction hypoxanthine + NAD(+) + H2O = xanthine + NADH + H(+). Functionally, key enzyme in purine degradation. Catalyzes the oxidation of hypoxanthine to xanthine. Catalyzes the oxidation of xanthine to uric acid. In Calliphora vicina (Blue blowfly), this protein is Xanthine dehydrogenase (XDH).